The sequence spans 444 residues: uncharacterized protein (444 aa).

Residue Lys268 is modified to N6-(pyridoxal phosphate)lysine.

It belongs to the class-III pyridoxal-phosphate-dependent aminotransferase family. Pyridoxal 5'-phosphate serves as cofactor.

This is an uncharacterized protein from Bacillus subtilis (strain 168).